We begin with the raw amino-acid sequence, 161 residues long: Cytochrome c-type biogenesis protein CcmE (161 aa).

At 1–8 (MNPRRKKR) the chain is on the cytoplasmic side. The helical; Signal-anchor for type II membrane protein transmembrane segment at 9–29 (LGLILALFVGISATVGLMLYA) threads the bilayer. At 30 to 161 (LNQNMDLFYT…TEQQKQGTGQ (132 aa)) the chain is on the periplasmic side. Residues H129 and Y133 each coordinate heme. Residues 142–161 (MKKTHEPLQYTEQQKQGTGQ) form a disordered region. Positions 151 to 161 (YTEQQKQGTGQ) are enriched in polar residues.

This sequence belongs to the CcmE/CycJ family.

It is found in the cell inner membrane. Its function is as follows. Heme chaperone required for the biogenesis of c-type cytochromes. Transiently binds heme delivered by CcmC and transfers the heme to apo-cytochromes in a process facilitated by CcmF and CcmH. The sequence is that of Cytochrome c-type biogenesis protein CcmE from Aliivibrio fischeri (strain ATCC 700601 / ES114) (Vibrio fischeri).